We begin with the raw amino-acid sequence, 206 residues long: Ras-related protein Rab7 (206 aa).

GTP-binding positions include 15–22 (GDSGVGKT), 63–67 (DTAGQ), and 125–128 (NKID). 2 S-geranylgeranyl cysteine lipidation sites follow: Cys204 and Cys206. Cys206 is subject to Cysteine methyl ester.

This sequence belongs to the small GTPase superfamily. Rab family.

The protein localises to the cell membrane. Protein transport. Probably involved in vesicular traffic. This is Ras-related protein Rab7 from Pisum sativum (Garden pea).